A 1037-amino-acid chain; its full sequence is Glycine dehydrogenase (decarboxylating) 1, mitochondrial (1037 aa).

Residues 1–67 (MERARRLAYR…AFGRHQQTRS (67 aa)) constitute a mitochondrion transit peptide. Cysteine 98 carries the post-translational modification S-glutathionyl cysteine; transient. An S-glutathionyl cysteine mark is found at cysteine 402 and cysteine 463. Lysine 774 bears the N6-(pyridoxal phosphate)lysine mark. An S-glutathionyl cysteine; transient mark is found at cysteine 777, cysteine 943, and cysteine 1022.

This sequence belongs to the GcvP family. Homodimer. The glycine cleavage system is composed of four proteins: P, T, L and H. The cofactor is pyridoxal 5'-phosphate. Glutathionylated at Cys-98, Cys-777, Cys-943 and Cys-1022 after S-nitrosoglutathione treatment. Post-translationally, S-nitrosylated at unknown positions by nitric oxide. As to expression, expressed in leaves. Detected in roots, stems, flowers and siliques.

The protein resides in the mitochondrion. It carries out the reaction N(6)-[(R)-lipoyl]-L-lysyl-[glycine-cleavage complex H protein] + glycine + H(+) = N(6)-[(R)-S(8)-aminomethyldihydrolipoyl]-L-lysyl-[glycine-cleavage complex H protein] + CO2. Inhibited by harpin, S-nitrosoglutathione (GSNO), nitric oxide, N-ethylmaleimide and 5,5'-dithiobis-(2-nitrobenzoic acid). Its function is as follows. The glycine decarboxylase (GDC) or glycine cleavage system catalyzes the degradation of glycine. The P protein binds the alpha-amino group of glycine through its pyridoxal phosphate cofactor; CO(2) is released and the remaining methylamine moiety is then transferred to the lipoamide cofactor of the H protein. The protein is Glycine dehydrogenase (decarboxylating) 1, mitochondrial (GLDP1) of Arabidopsis thaliana (Mouse-ear cress).